The sequence spans 59 residues: Dimethylamine corrinoid protein (59 aa).

The B12-binding domain maps to 1–59 (TLQGQKDVIELLKEEGLRDKIKVMVGGAPATQAWADKIGADCYAENASEAVAKAKELLA).

This sequence belongs to the methylamine corrinoid protein family.

It functions in the pathway one-carbon metabolism; methanogenesis from dimethylamine. In terms of biological role, acts as a methyl group carrier between MtbB and MtbA. This Methanosarcina thermophila protein is Dimethylamine corrinoid protein (mtbC).